Reading from the N-terminus, the 201-residue chain is Ubiquinone biosynthesis accessory factor UbiJ (201 aa).

Residues 15–112 enclose the SCP2 domain; sequence LNTFLYRSPA…QVVQNFVALA (98 aa).

This sequence belongs to the UbiJ family.

It is found in the cytoplasm. Its pathway is cofactor biosynthesis; ubiquinone biosynthesis. Required for ubiquinone (coenzyme Q) biosynthesis under aerobic conditions. Binds hydrophobic ubiquinone biosynthetic intermediates via its SCP2 domain and is essential for the stability of the Ubi complex. May constitute a docking platform where Ubi enzymes assemble and access their SCP2-bound polyprenyl substrates. Required for intracellular proliferation in macrophages. The chain is Ubiquinone biosynthesis accessory factor UbiJ from Salmonella typhimurium (strain LT2 / SGSC1412 / ATCC 700720).